The following is a 554-amino-acid chain: Neutral amino acid transporter 9 (554 aa).

Residues methionine 1–serine 112 are Cytoplasmic-facing. The helical transmembrane segment at isoleucine 113–tryptophan 133 threads the bilayer. The important for arginine binding and amino acid transport stretch occupies residues threonine 122–serine 127. Serine 127 contacts arginine. Residues glycine 134–glycine 139 are Lumenal-facing. A helical membrane pass occupies residues phenylalanine 140–arginine 160. The Cytoplasmic segment spans residues valine 161 to arginine 191. Residues tryptophan 192 to phenylalanine 218 form a helical membrane-spanning segment. The Lumenal portion of the chain corresponds to asparagine 219 to threonine 276. N-linked (GlcNAc...) asparagine glycans are attached at residues asparagine 232, asparagine 241, asparagine 258, and asparagine 267. Cysteine 248 and cysteine 417 are oxidised to a cystine. The helical transmembrane segment at tryptophan 277–leucine 293 threads the bilayer. Topologically, residues proline 294–serine 302 are cytoplasmic. Residues phenylalanine 303–alanine 327 form a helical membrane-spanning segment. Over histidine 328–arginine 349 the chain is Lumenal. A helical membrane pass occupies residues leucine 350 to isoleucine 370. Topologically, residues threonine 371–serine 387 are cytoplasmic. Residues isoleucine 388 to phenylalanine 408 form a helical membrane-spanning segment. Residues proline 409 to aspartate 430 are Lumenal-facing. A helical transmembrane segment spans residues isoleucine 431–leucine 451. Positions arginine 437–valine 447 match the CARC motif motif. The short motif at leucine 450–arginine 456 is the CRAC motif element. At glycine 452–phenylalanine 472 the chain is on the cytoplasmic side. Residues histidine 473–proline 493 form a helical membrane-spanning segment. Residues asparagine 494–arginine 500 are Lumenal-facing. The chain crosses the membrane as a helical span at residues phenylalanine 501–isoleucine 521. Residues serine 522–serine 533 are Cytoplasmic-facing. Residues isoleucine 534–methionine 554 traverse the membrane as a helical segment.

This sequence belongs to the amino acid/polyamine transporter 2 family. SLC38A9 subfamily. Associated component of the Ragulator complex. Associated component of the Rag GTPases heterodimers. Post-translationally, glycosylated.

It localises to the lysosome membrane. Its subcellular location is the late endosome membrane. The enzyme catalyses L-leucine(in) = L-leucine(out). The catalysed reaction is L-tyrosine(in) = L-tyrosine(out). It catalyses the reaction L-glutamine(out) = L-glutamine(in). It carries out the reaction L-asparagine(out) = L-asparagine(in). Functionally, lysosomal amino acid transporter involved in the activation of mTORC1 in response to amino acid levels. Probably acts as an amino acid sensor of the Rag GTPases and Ragulator complexes, 2 complexes involved in amino acid sensing and activation of mTORC1, a signaling complex promoting cell growth in response to growth factors, energy levels, and amino acids. Following activation by amino acids, the Ragulator and Rag GTPases function as a scaffold recruiting mTORC1 to lysosomes where it is in turn activated. SLC38A9 mediates transport of amino acids with low capacity and specificity with a slight preference for polar amino acids. Acts as an arginine sensor. Following activation by arginine binding, mediates transport of L-glutamine, leucine and tyrosine with high efficiency, and is required for the efficient utilization of these amino acids after lysosomal protein degradation. However, the transport mechanism is not well defined and the role of sodium is not clear. Guanine exchange factor (GEF) that, upon arginine binding, stimulates GDP release from RRAGA and therefore activates the Rag GTPase heterodimer and the mTORC1 pathway in response to nutrient sufficiency. This is Neutral amino acid transporter 9 from Xenopus tropicalis (Western clawed frog).